A 62-amino-acid chain; its full sequence is Short neurotoxin C (62 aa).

The span at 1–16 (RRCFNQQSSQPQTNKS) shows a compositional bias: polar residues. Residues 1 to 22 (RRCFNQQSSQPQTNKSCPPGEN) are disordered. 4 cysteine pairs are disulfide-bonded: cysteine 3–cysteine 24, cysteine 17–cysteine 41, cysteine 43–cysteine 54, and cysteine 55–cysteine 60.

The protein belongs to the three-finger toxin family. Short-chain subfamily. Type I alpha-neurotoxin sub-subfamily. In terms of tissue distribution, expressed by the venom gland.

It is found in the secreted. Functionally, binds to muscle nicotinic acetylcholine receptor (nAChR) and inhibit acetylcholine from binding to the receptor, thereby impairing neuromuscular transmission. The protein is Short neurotoxin C of Laticauda laticaudata (Blue-ringed sea krait).